The primary structure comprises 76 residues: Small ribosomal subunit protein bS16 (76 aa).

It belongs to the bacterial ribosomal protein bS16 family.

The chain is Small ribosomal subunit protein bS16 from Helicobacter acinonychis (strain Sheeba).